Here is a 276-residue protein sequence, read N- to C-terminus: Sulfur carrier protein FdhD (276 aa).

Cys-122 acts as the Cysteine persulfide intermediate in catalysis. A Mo-bis(molybdopterin guanine dinucleotide)-binding site is contributed by 259 to 264; sequence FCRRGR.

Belongs to the FdhD family.

It localises to the cytoplasm. Its function is as follows. Required for formate dehydrogenase (FDH) activity. Acts as a sulfur carrier protein that transfers sulfur from IscS to the molybdenum cofactor prior to its insertion into FDH. The chain is Sulfur carrier protein FdhD from Proteus mirabilis (strain HI4320).